Consider the following 294-residue polypeptide: Equatorin (294 aa).

An N-terminal signal peptide occupies residues 1–14; sequence MNFILFIFIPGVFS. Over 15-181 the chain is Vesicular; that stretch reads LKSSTLKPTI…QPDLEDLKIK (167 aa). Asn-76 carries an N-linked (GlcNAc...) asparagine glycan. The tract at residues 107–126 is disordered; that stretch reads KSTIEEETTTSEPSHKNIQR. The N-linked (GlcNAc...) asparagine glycan is linked to Asn-143. A helical membrane pass occupies residues 182–202; sequence IMLGISLMTLLLFVVLLAFCS. At 203–294 the chain is on the cytoplasmic side; sequence ATLYKLRHLS…MHENDESVTR (92 aa).

Interacts with SNAP25. In terms of processing, highly N- and O-glycosylated; contains sialic acid. Isoform 1 is highly expressed in testis. Isoform 2 is expressed at low levels in skin and blood.

It localises to the cytoplasmic vesicle. The protein resides in the secretory vesicle. The protein localises to the acrosome membrane. It is found in the acrosome inner membrane. Its subcellular location is the acrosome outer membrane. Functionally, acrosomal membrane-anchored protein involved in the process of fertilization and in acrosome biogenesis. The protein is Equatorin (EQTN) of Homo sapiens (Human).